Here is a 173-residue protein sequence, read N- to C-terminus: uncharacterized protein (173 aa).

In terms of domain architecture, N-acetyltransferase spans 4–173 (VKIVQVSEKD…TDFLLKKALV (170 aa)). Acetyl-CoA-binding positions include 97-99 (IYL), 106-110 (RGLGK), and 136-138 (NEN).

This is an uncharacterized protein from Lactobacillus delbrueckii subsp. lactis.